Here is an 873-residue protein sequence, read N- to C-terminus: Zinc fingers and homeoboxes protein 1 (873 aa).

A disordered region spans residues leucine 24–asparagine 63. Phosphothreonine is present on threonine 36. Phosphoserine occurs at positions 45, 47, and 48. 2 consecutive C2H2-type zinc fingers follow at residues tyrosine 70–histidine 93 and tyrosine 102–histidine 125. Lysine 159 participates in a covalent cross-link: Glycyl lysine isopeptide (Lys-Gly) (interchain with G-Cter in SUMO2). Serine 202 carries the phosphoserine modification. The disordered stretch occupies residues serine 202–threonine 236. Basic and acidic residues predominate over residues asparagine 212–isoleucine 221. Residues glutamate 223–threonine 236 show a composition bias toward low complexity. Residues asparagine 272–proline 432 are required for dimerization. The tract at residues asparagine 272–phenylalanine 564 is required for interaction with NFYA. Positions asparagine 284–glutamate 346 form a DNA-binding region, homeobox 1. Glycyl lysine isopeptide (Lys-Gly) (interchain with G-Cter in SUMO2) cross-links involve residues lysine 441, lysine 454, lysine 485, and lysine 629. 2 DNA-binding regions (homeobox) span residues serine 464–glutamine 526 and proline 569–methionine 630. Disordered regions lie at residues lysine 626–lysine 667 and serine 732–aspartate 770. Serine 648 is modified (phosphoserine). The segment at residues serine 660–tryptophan 722 is a DNA-binding region (homeobox 4). Residues methionine 734 to asparagine 768 form a required for nuclear localization region. Over residues leucine 740–lysine 764 the composition is skewed to basic residues. Phosphoserine is present on serine 774. Positions lysine 777 to phenylalanine 832 form a DNA-binding region, homeobox 5. The disordered stretch occupies residues isoleucine 829 to aspartate 873. Residues leucine 831–threonine 857 are compositionally biased toward acidic residues. The tract at residues leucine 831–aspartate 873 is required for repressor activity. Over residues histidine 863–aspartate 873 the composition is skewed to basic residues.

Belongs to the ZHX family. Forms homodimers. Heterodimer (via HD1 domain) with ZHX2 (via HD1 domain). Also forms a heterodimer with ZHX3 which is a prerequisite for repressor activity. Interacts with ATF7IP and NFYA. Interacts (via homeobox domains) with DNMT3B (via PWWP domain). Ubiquitously expressed. Expressed in podocytes.

The protein localises to the nucleus. Its function is as follows. Acts as a transcriptional repressor. Increases DNMT3B-mediated repressive transcriptional activity when DNMT3B is tethered to DNA. May link molecule between DNMT3B and other co-repressor proteins. This Homo sapiens (Human) protein is Zinc fingers and homeoboxes protein 1 (ZHX1).